A 163-amino-acid polypeptide reads, in one-letter code: Large ribosomal subunit protein uL10 (163 aa).

Belongs to the universal ribosomal protein uL10 family. As to quaternary structure, part of the ribosomal stalk of the 50S ribosomal subunit. The N-terminus interacts with L11 and the large rRNA to form the base of the stalk. The C-terminus forms an elongated spine to which L12 dimers bind in a sequential fashion forming a multimeric L10(L12)X complex.

In terms of biological role, forms part of the ribosomal stalk, playing a central role in the interaction of the ribosome with GTP-bound translation factors. The chain is Large ribosomal subunit protein uL10 from Blochmanniella pennsylvanica (strain BPEN).